A 227-amino-acid chain; its full sequence is Deoxyribose-phosphate aldolase (227 aa).

The active-site Proton donor/acceptor is aspartate 84. Lysine 146 serves as the catalytic Schiff-base intermediate with acetaldehyde. Lysine 188 functions as the Proton donor/acceptor in the catalytic mechanism.

This sequence belongs to the DeoC/FbaB aldolase family. DeoC type 1 subfamily.

The protein localises to the cytoplasm. The catalysed reaction is 2-deoxy-D-ribose 5-phosphate = D-glyceraldehyde 3-phosphate + acetaldehyde. It functions in the pathway carbohydrate degradation; 2-deoxy-D-ribose 1-phosphate degradation; D-glyceraldehyde 3-phosphate and acetaldehyde from 2-deoxy-alpha-D-ribose 1-phosphate: step 2/2. Its function is as follows. Catalyzes a reversible aldol reaction between acetaldehyde and D-glyceraldehyde 3-phosphate to generate 2-deoxy-D-ribose 5-phosphate. The polypeptide is Deoxyribose-phosphate aldolase (Pyrobaculum islandicum (strain DSM 4184 / JCM 9189 / GEO3)).